The primary structure comprises 143 residues: Transcriptional regulator SlyA (143 aa).

One can recognise an HTH marR-type domain in the interval 2–135; sequence ESTLGSDLAR…LSGLIDKLEK (134 aa). The segment at residues 49 to 72 is a DNA-binding region (H-T-H motif); it reads QIQLAKAIGIEQPSLVRTLDQLEE.

This sequence belongs to the SlyA family. In terms of assembly, homodimer.

Its function is as follows. Transcription regulator that can specifically activate or repress expression of target genes. The polypeptide is Transcriptional regulator SlyA (Yersinia pestis (strain Pestoides F)).